The sequence spans 61 residues: Large ribosomal subunit protein bL32 (61 aa).

Residues 1-44 (MAVQQNRKSRSRRDMRRSHDALTENALTVDQTTGETHRRHHVTK) are disordered. Residues 7–16 (RKSRSRRDMR) show a composition bias toward basic residues. The segment covering 25–34 (NALTVDQTTG) has biased composition (polar residues).

Belongs to the bacterial ribosomal protein bL32 family.

This Acinetobacter baylyi (strain ATCC 33305 / BD413 / ADP1) protein is Large ribosomal subunit protein bL32.